The chain runs to 131 residues: Small ribosomal subunit protein uS8c (131 aa).

Belongs to the universal ribosomal protein uS8 family. In terms of assembly, part of the 30S ribosomal subunit.

The protein resides in the plastid. It localises to the chloroplast. In terms of biological role, one of the primary rRNA binding proteins, it binds directly to 16S rRNA central domain where it helps coordinate assembly of the platform of the 30S subunit. The polypeptide is Small ribosomal subunit protein uS8c (rps8) (Phalaenopsis aphrodite subsp. formosana (Moth orchid)).